The primary structure comprises 183 residues: Threonylcarbamoyl-AMP synthase (183 aa).

The region spanning 1–183 (MNITQIIEKL…LFTNQLVRQG (183 aa)) is the YrdC-like domain.

The protein belongs to the SUA5 family. TsaC subfamily.

The protein localises to the cytoplasm. It carries out the reaction L-threonine + hydrogencarbonate + ATP = L-threonylcarbamoyladenylate + diphosphate + H2O. Functionally, required for the formation of a threonylcarbamoyl group on adenosine at position 37 (t(6)A37) in tRNAs that read codons beginning with adenine. Catalyzes the conversion of L-threonine, HCO(3)(-)/CO(2) and ATP to give threonylcarbamoyl-AMP (TC-AMP) as the acyladenylate intermediate, with the release of diphosphate. This is Threonylcarbamoyl-AMP synthase from Histophilus somni (strain 129Pt) (Haemophilus somnus).